A 205-amino-acid chain; its full sequence is Urease accessory protein UreE (205 aa).

The tract at residues 171–205 is disordered; that stretch reads AHEAHPHAHSHAGGHGHVHSGHGHGGKHGEHDAES. Residues 177 to 196 are compositionally biased toward basic residues; it reads HAHSHAGGHGHVHSGHGHGG.

It belongs to the UreE family.

The protein localises to the cytoplasm. Functionally, involved in urease metallocenter assembly. Binds nickel. Probably functions as a nickel donor during metallocenter assembly. The sequence is that of Urease accessory protein UreE from Bordetella bronchiseptica (strain ATCC BAA-588 / NCTC 13252 / RB50) (Alcaligenes bronchisepticus).